Reading from the N-terminus, the 586-residue chain is Ferredoxin--nitrite reductase, chloroplastic (586 aa).

The segment covering 1–18 (MTSFSLTFTSPLLPSSST) has biased composition (low complexity). The tract at residues 1-20 (MTSFSLTFTSPLLPSSSTKP) is disordered. Residues 1–25 (MTSFSLTFTSPLLPSSSTKPKRSVL) constitute a chloroplast transit peptide. Lys103 participates in a covalent cross-link: Glycyl lysine isopeptide (Lys-Gly) (interchain with G-Cter in ubiquitin). [4Fe-4S] cluster is bound by residues Cys464, Cys470, Cys505, and Cys509. Cys509 lines the siroheme pocket.

The protein belongs to the nitrite and sulfite reductase 4Fe-4S domain family. Monomer. It depends on siroheme as a cofactor. Requires [4Fe-4S] cluster as cofactor.

Its subcellular location is the plastid. The protein localises to the chloroplast. The enzyme catalyses 6 oxidized [2Fe-2S]-[ferredoxin] + NH4(+) + 2 H2O = nitrite + 6 reduced [2Fe-2S]-[ferredoxin] + 8 H(+). It functions in the pathway nitrogen metabolism; nitrate reduction (assimilation). Catalyzes the six-electron reduction of nitrite to ammonium. This chain is Ferredoxin--nitrite reductase, chloroplastic (NIR1), found in Arabidopsis thaliana (Mouse-ear cress).